Consider the following 982-residue polypeptide: Bifunctional glutamine synthetase adenylyltransferase/adenylyl-removing enzyme (982 aa).

The segment at 1-460 is adenylyl removase; the sequence is MSLPSLANLP…HFRQVIADPD (460 aa). Positions 473–982 are adenylyl transferase; that stretch reads GAEWIPLWEE…IRIWRELRLG (510 aa).

This sequence belongs to the GlnE family. Requires Mg(2+) as cofactor.

It catalyses the reaction [glutamine synthetase]-O(4)-(5'-adenylyl)-L-tyrosine + phosphate = [glutamine synthetase]-L-tyrosine + ADP. The catalysed reaction is [glutamine synthetase]-L-tyrosine + ATP = [glutamine synthetase]-O(4)-(5'-adenylyl)-L-tyrosine + diphosphate. Functionally, involved in the regulation of glutamine synthetase GlnA, a key enzyme in the process to assimilate ammonia. When cellular nitrogen levels are high, the C-terminal adenylyl transferase (AT) inactivates GlnA by covalent transfer of an adenylyl group from ATP to specific tyrosine residue of GlnA, thus reducing its activity. Conversely, when nitrogen levels are low, the N-terminal adenylyl removase (AR) activates GlnA by removing the adenylyl group by phosphorolysis, increasing its activity. The regulatory region of GlnE binds the signal transduction protein PII (GlnB) which indicates the nitrogen status of the cell. This is Bifunctional glutamine synthetase adenylyltransferase/adenylyl-removing enzyme from Pseudomonas aeruginosa (strain ATCC 15692 / DSM 22644 / CIP 104116 / JCM 14847 / LMG 12228 / 1C / PRS 101 / PAO1).